A 445-amino-acid chain; its full sequence is Phosphoglucosamine mutase (445 aa).

S102 acts as the Phosphoserine intermediate in catalysis. Residues S102, D241, D243, and D245 each coordinate Mg(2+). Phosphoserine is present on S102.

This sequence belongs to the phosphohexose mutase family. Mg(2+) is required as a cofactor. In terms of processing, activated by phosphorylation.

The enzyme catalyses alpha-D-glucosamine 1-phosphate = D-glucosamine 6-phosphate. Its function is as follows. Catalyzes the conversion of glucosamine-6-phosphate to glucosamine-1-phosphate. The polypeptide is Phosphoglucosamine mutase (Serratia proteamaculans (strain 568)).